Here is a 530-residue protein sequence, read N- to C-terminus: T-complex protein 1 subunit zeta (530 aa).

G38 serves as a coordination point for ADP. G38 provides a ligand contact to ATP. Mg(2+) is bound at residue D89. G90, T91, T92, S93, T157, K158, and A410 together coordinate ADP. Residues G90, T91, and T92 each coordinate ATP. Residues A410, G411, D495, and K500 each coordinate ATP. D495 is a binding site for ADP.

In terms of assembly, component of the chaperonin-containing T-complex (TRiC), a hexadecamer composed of two identical back-to-back stacked rings enclosing a protein folding chamber. Each ring is made up of eight different subunits: TCP1/CCT1, CCT2, CCT3, CCT4, CCT5, CCT6A/CCT6, CCT7, CCT8. Interacts with PACRG.

The protein localises to the cytoplasm. It catalyses the reaction ATP + H2O = ADP + phosphate + H(+). Its function is as follows. Component of the chaperonin-containing T-complex (TRiC), a molecular chaperone complex that assists the folding of actin, tubulin and other proteins upon ATP hydrolysis. This is T-complex protein 1 subunit zeta from Gallus gallus (Chicken).